Here is a 488-residue protein sequence, read N- to C-terminus: Glutamyl-tRNA(Gln) amidotransferase subunit A (488 aa).

Catalysis depends on charge relay system residues Lys-77 and Ser-152. Residue Ser-176 is the Acyl-ester intermediate of the active site.

The protein belongs to the amidase family. GatA subfamily. In terms of assembly, heterotrimer of A, B and C subunits.

The enzyme catalyses L-glutamyl-tRNA(Gln) + L-glutamine + ATP + H2O = L-glutaminyl-tRNA(Gln) + L-glutamate + ADP + phosphate + H(+). Its function is as follows. Allows the formation of correctly charged Gln-tRNA(Gln) through the transamidation of misacylated Glu-tRNA(Gln) in organisms which lack glutaminyl-tRNA synthetase. The reaction takes place in the presence of glutamine and ATP through an activated gamma-phospho-Glu-tRNA(Gln). This is Glutamyl-tRNA(Gln) amidotransferase subunit A from Streptococcus pyogenes serotype M3 (strain ATCC BAA-595 / MGAS315).